The following is a 403-amino-acid chain: Phosphoglycerate kinase (403 aa).

Substrate contacts are provided by residues 22 to 24 (DLN), Arg-37, 60 to 63 (HLGN), Arg-119, and Arg-152. ATP is bound by residues Lys-202, Glu-325, and 355-358 (GGDT).

Belongs to the phosphoglycerate kinase family. In terms of assembly, monomer.

It localises to the cytoplasm. The enzyme catalyses (2R)-3-phosphoglycerate + ATP = (2R)-3-phospho-glyceroyl phosphate + ADP. It functions in the pathway carbohydrate degradation; glycolysis; pyruvate from D-glyceraldehyde 3-phosphate: step 2/5. In Orientia tsutsugamushi (strain Boryong) (Rickettsia tsutsugamushi), this protein is Phosphoglycerate kinase.